The primary structure comprises 592 residues: Aspartate--tRNA ligase (592 aa).

Glu-173 serves as a coordination point for L-aspartate. Positions 197–200 (QLFK) are aspartate. Arg-219 contacts L-aspartate. ATP-binding positions include 219–221 (RDE) and Gln-228. His-449 lines the L-aspartate pocket. An ATP-binding site is contributed by Glu-483. Arg-490 is an L-aspartate binding site. An ATP-binding site is contributed by 535–538 (GLDR).

It belongs to the class-II aminoacyl-tRNA synthetase family. Type 1 subfamily. In terms of assembly, homodimer.

It is found in the cytoplasm. The enzyme catalyses tRNA(Asp) + L-aspartate + ATP = L-aspartyl-tRNA(Asp) + AMP + diphosphate. In terms of biological role, catalyzes the attachment of L-aspartate to tRNA(Asp) in a two-step reaction: L-aspartate is first activated by ATP to form Asp-AMP and then transferred to the acceptor end of tRNA(Asp). In Shewanella loihica (strain ATCC BAA-1088 / PV-4), this protein is Aspartate--tRNA ligase.